Consider the following 496-residue polypeptide: Fascin (496 aa).

It belongs to the fascin family.

It localises to the cytoplasm. The protein resides in the cytoskeleton. Functionally, acts as an actin bundling protein. This Strongylocentrotus purpuratus (Purple sea urchin) protein is Fascin.